Consider the following 528-residue polypeptide: Probable feruloyl esterase B-1 (528 aa).

An N-terminal signal peptide occupies residues 1–19; the sequence is MMWWFLLIGLASAAATASS. Intrachain disulfides connect Cys-29–Cys-78, Cys-64–Cys-117, Cys-190–Cys-445, Cys-259–Cys-276, Cys-285–Cys-295, and Cys-505–Cys-527. 2 N-linked (GlcNAc...) asparagine glycosylation sites follow: Asn-83 and Asn-101. Ser-191 functions as the Acyl-ester intermediate in the catalytic mechanism. Residues Asp-260, Asp-263, Ala-265, Asp-267, and Ile-269 each contribute to the Ca(2+) site. N-linked (GlcNAc...) asparagine glycosylation is found at Asn-286, Asn-354, and Asn-385. Active-site charge relay system residues include Asp-404 and His-444.

Belongs to the tannase family.

The protein localises to the secreted. The catalysed reaction is feruloyl-polysaccharide + H2O = ferulate + polysaccharide.. Its function is as follows. Involved in degradation of plant cell walls. Hydrolyzes the feruloyl-arabinose ester bond in arabinoxylans as well as the feruloyl-galactose and feruloyl-arabinose ester bonds in pectin. The chain is Probable feruloyl esterase B-1 (faeB-1) from Aspergillus fumigatus (strain ATCC MYA-4609 / CBS 101355 / FGSC A1100 / Af293) (Neosartorya fumigata).